The following is a 442-amino-acid chain: Casein kinase 1-like protein 10 (442 aa).

The Protein kinase domain occupies 9 to 278 (FKLGRKIGSG…LKRLFRDLFI (270 aa)). ATP is bound by residues 15 to 23 (IGSGSFGEL) and lysine 38. The Proton acceptor role is filled by aspartate 128. Disordered regions lie at residues 299–323 (GSIS…ERNE) and 381–421 (AVMS…LSAR). A compositionally biased stretch (pro residues) spans 305 to 317 (RPNPKPALDPPGP). Low complexity predominate over residues 384–394 (SSSQPGSSGEL). Residues 400–417 (SKLFSSSAQKIQPVQETK) are compositionally biased toward polar residues.

Belongs to the protein kinase superfamily. CK1 Ser/Thr protein kinase family. Casein kinase I subfamily. In terms of assembly, monomer. In terms of processing, autophosphorylated.

It is found in the cytoplasm. The protein localises to the cell junction. It localises to the plasmodesma. The catalysed reaction is L-seryl-[protein] + ATP = O-phospho-L-seryl-[protein] + ADP + H(+). It catalyses the reaction L-threonyl-[protein] + ATP = O-phospho-L-threonyl-[protein] + ADP + H(+). Its function is as follows. Casein kinases are operationally defined by their preferential utilization of acidic proteins such as caseins as substrates. It can phosphorylate a large number of proteins. The chain is Casein kinase 1-like protein 10 from Arabidopsis thaliana (Mouse-ear cress).